A 70-amino-acid chain; its full sequence is U2-agatoxin-Ao1b (70 aa).

Residues 1 to 20 form the signal peptide; it reads MRAIISLILISAMVFSMIAA. The propeptide occupies 21 to 34; sequence VPEEEGLQLSEDER. Cystine bridges form between C37–C53, C44–C58, and C52–C68. At L69 the chain carries Leucine amide.

It belongs to the neurotoxin 01 (U2-agtx) family. In terms of tissue distribution, expressed by the venom gland.

It localises to the secreted. Functionally, insect active toxin causing rapid but reversible paralysis in crickets. No activity shown in mammals. Does not show effect on mammalian voltage-gated calcium channels. The protein is U2-agatoxin-Ao1b of Agelena orientalis (Funnel-web spider).